The following is an 88-amino-acid chain: LYR motif-containing protein 2 (88 aa).

The N-terminal 19 residues, 1–19 (MAASRLPPATLTLKQFVRR), are a transit peptide targeting the mitochondrion.

This sequence belongs to the complex I LYR family.

The protein resides in the mitochondrion. Functionally, involved in efficient integration of the N-module into mitochondrial respiratory chain complex I. The chain is LYR motif-containing protein 2 (LYRM2) from Homo sapiens (Human).